We begin with the raw amino-acid sequence, 154 residues long: Small ribosomal subunit protein bS6 (154 aa).

The segment at 94–154 (VKQEGPLPTP…SSQGKESQKS (61 aa)) is disordered. Polar residues predominate over residues 103–112 (PRSSNKGYNQ). The segment covering 113 to 139 (SEKKDIESIDSTNKSEFKEEANDKKTA) has biased composition (basic and acidic residues). Residues 140 to 154 (TSESTSSQGKESQKS) are compositionally biased toward polar residues.

It belongs to the bacterial ribosomal protein bS6 family.

Its function is as follows. Binds together with bS18 to 16S ribosomal RNA. In Prochlorococcus marinus subsp. pastoris (strain CCMP1986 / NIES-2087 / MED4), this protein is Small ribosomal subunit protein bS6.